The sequence spans 130 residues: Small ribosomal subunit protein uS11c (130 aa).

Belongs to the universal ribosomal protein uS11 family. In terms of assembly, part of the 30S ribosomal subunit.

The protein resides in the plastid. Its subcellular location is the chloroplast. The protein is Small ribosomal subunit protein uS11c of Adiantum capillus-veneris (Maidenhair fern).